The following is an 858-amino-acid chain: Translation initiation factor IF-2 (858 aa).

The interval 49–271 is disordered; that stretch reads TTTVTHPKSQ…NKPAPVRKDK (223 aa). Low complexity predominate over residues 80-226; it reads NQQQSNSRHQ…RFGGSLNSNN (147 aa). Residues 239–256 are compositionally biased toward basic residues; that stretch reads NRRRNNRNNKSRNNKNQR. Positions 359-528 constitute a tr-type G domain; it reads PRAPVVTVMG…LLQSEVLELT (170 aa). Residues 368–375 are G1; that stretch reads GHVDHGKT. Residue 368–375 coordinates GTP; that stretch reads GHVDHGKT. Residues 393 to 397 form a G2 region; that stretch reads GITQA. Residues 414-417 form a G3 region; the sequence is DTPG. GTP is bound by residues 414 to 418 and 468 to 471; these read DTPGH and NKID. The G4 stretch occupies residues 468 to 471; the sequence is NKID. Residues 504-506 form a G5 region; sequence SAK.

The protein belongs to the TRAFAC class translation factor GTPase superfamily. Classic translation factor GTPase family. IF-2 subfamily.

Its subcellular location is the cytoplasm. Functionally, one of the essential components for the initiation of protein synthesis. Protects formylmethionyl-tRNA from spontaneous hydrolysis and promotes its binding to the 30S ribosomal subunits. Also involved in the hydrolysis of GTP during the formation of the 70S ribosomal complex. This is Translation initiation factor IF-2 from Lactiplantibacillus plantarum (strain ATCC BAA-793 / NCIMB 8826 / WCFS1) (Lactobacillus plantarum).